A 300-amino-acid polypeptide reads, in one-letter code: tRNA-cytidine(32) 2-sulfurtransferase (300 aa).

The short motif at 41 to 46 is the PP-loop motif element; it reads SGGKDS. Positions 116, 119, and 207 each coordinate [4Fe-4S] cluster.

The protein belongs to the TtcA family. In terms of assembly, homodimer. It depends on Mg(2+) as a cofactor. [4Fe-4S] cluster is required as a cofactor.

The protein resides in the cytoplasm. The enzyme catalyses cytidine(32) in tRNA + S-sulfanyl-L-cysteinyl-[cysteine desulfurase] + AH2 + ATP = 2-thiocytidine(32) in tRNA + L-cysteinyl-[cysteine desulfurase] + A + AMP + diphosphate + H(+). It functions in the pathway tRNA modification. Its function is as follows. Catalyzes the ATP-dependent 2-thiolation of cytidine in position 32 of tRNA, to form 2-thiocytidine (s(2)C32). The sulfur atoms are provided by the cysteine/cysteine desulfurase (IscS) system. The protein is tRNA-cytidine(32) 2-sulfurtransferase of Idiomarina loihiensis (strain ATCC BAA-735 / DSM 15497 / L2-TR).